Consider the following 159-residue polypeptide: Protein Smg homolog (159 aa).

It belongs to the Smg family.

This chain is Protein Smg homolog, found in Dichelobacter nodosus (strain VCS1703A).